The primary structure comprises 344 residues: Methionine import ATP-binding protein MetN (344 aa).

An ABC transporter domain is found at 2–241; that stretch reads IELQGLSQRF…PQHEVTRAMI (240 aa). Residue 38-45 coordinates ATP; sequence GRSGAGKS.

This sequence belongs to the ABC transporter superfamily. Methionine importer (TC 3.A.1.24) family. As to quaternary structure, the complex is composed of two ATP-binding proteins (MetN), two transmembrane proteins (MetI) and a solute-binding protein (MetQ).

It localises to the cell inner membrane. The catalysed reaction is L-methionine(out) + ATP + H2O = L-methionine(in) + ADP + phosphate + H(+). The enzyme catalyses D-methionine(out) + ATP + H2O = D-methionine(in) + ADP + phosphate + H(+). Its function is as follows. Part of the ABC transporter complex MetNIQ involved in methionine import. Responsible for energy coupling to the transport system. This is Methionine import ATP-binding protein MetN from Cupriavidus pinatubonensis (strain JMP 134 / LMG 1197) (Cupriavidus necator (strain JMP 134)).